The chain runs to 467 residues: Ribulose bisphosphate carboxylase large chain (467 aa).

Position 5 is an N6,N6,N6-trimethyllysine (Lys5). Positions 114 and 164 each coordinate substrate. The Proton acceptor role is filled by Lys166. Residue Lys168 participates in substrate binding. Mg(2+) is bound by residues Lys192, Asp194, and Glu195. Lys192 is subject to N6-carboxylysine. The active-site Proton acceptor is His285. Substrate-binding residues include Arg286, His318, and Ser370.

Belongs to the RuBisCO large chain family. Type I subfamily. In terms of assembly, heterohexadecamer of 8 large chains and 8 small chains; disulfide-linked. The disulfide link is formed within the large subunit homodimers. Mg(2+) serves as cofactor. The disulfide bond which can form in the large chain dimeric partners within the hexadecamer appears to be associated with oxidative stress and protein turnover.

It localises to the plastid. The protein resides in the chloroplast. It catalyses the reaction 2 (2R)-3-phosphoglycerate + 2 H(+) = D-ribulose 1,5-bisphosphate + CO2 + H2O. It carries out the reaction D-ribulose 1,5-bisphosphate + O2 = 2-phosphoglycolate + (2R)-3-phosphoglycerate + 2 H(+). RuBisCO catalyzes two reactions: the carboxylation of D-ribulose 1,5-bisphosphate, the primary event in carbon dioxide fixation, as well as the oxidative fragmentation of the pentose substrate in the photorespiration process. Both reactions occur simultaneously and in competition at the same active site. This is Ribulose bisphosphate carboxylase large chain from Hydrophyllum virginianum (Eastern waterleaf).